The sequence spans 321 residues: Olfactory receptor 5P60 (321 aa).

The Extracellular segment spans residues 1 to 28; that stretch reads MAFLHNGNHTAVTEFILLGLTDDPVLRI. An N-linked (GlcNAc...) asparagine glycan is attached at Asn-8. Residues 29–49 traverse the membrane as a helical segment; that stretch reads VLFTIILCIYLVTVSGNLSTI. At 50 to 57 the chain is on the cytoplasmic side; sequence LLIRVSSQ. The chain crosses the membrane as a helical span at residues 58–78; that stretch reads LHHPMYFFLSHLASADIGYSS. The Extracellular portion of the chain corresponds to 79–102; the sequence is SVTPNMLVNFLVKQNTISYIGCSI. A disulfide bond links Cys-100 and Cys-192. A helical transmembrane segment spans residues 103 to 123; sequence QFGSAAFFGGLECFLLAVMAY. Over 124-136 the chain is Cytoplasmic; that stretch reads DRFVAICNPLLYS. A helical membrane pass occupies residues 137–157; it reads TKMSTQVCVQLVVGSYIGGFL. The Extracellular portion of the chain corresponds to 158–199; sequence NASFATVSFLFLFFCGPNIINHFFCDFAPLIELSCSDVRISV. The helical transmembrane segment at 200–220 threads the bilayer; it reads LVTSFSAGTVTMLTVLVIAIS. Residues 221–240 are Cytoplasmic-facing; that stretch reads YTYILITILKMRSTEGRHKA. A helical transmembrane segment spans residues 241–261; sequence FSTCTSHLTAVSLFYGTITFI. At 262 to 274 the chain is on the extracellular side; the sequence is YVMPKSRYSTDQN. The chain crosses the membrane as a helical span at residues 275–295; the sequence is KVVSVFYMVVIPMLNPLIYSL. At 296-321 the chain is on the cytoplasmic side; it reads RNNEIKGALRRHLGKKIFSQSNILFY.

Belongs to the G-protein coupled receptor 1 family.

The protein resides in the cell membrane. Potential odorant receptor. This is Olfactory receptor 5P60 from Mus musculus (Mouse).